Here is a 304-residue protein sequence, read N- to C-terminus: Acetylglutamate kinase (304 aa).

Residues 74–75 (GG), arginine 96, and asparagine 201 each bind substrate.

Belongs to the acetylglutamate kinase family. ArgB subfamily.

It is found in the cytoplasm. The catalysed reaction is N-acetyl-L-glutamate + ATP = N-acetyl-L-glutamyl 5-phosphate + ADP. Its pathway is amino-acid biosynthesis; L-arginine biosynthesis; N(2)-acetyl-L-ornithine from L-glutamate: step 2/4. Catalyzes the ATP-dependent phosphorylation of N-acetyl-L-glutamate. In Alkalilimnicola ehrlichii (strain ATCC BAA-1101 / DSM 17681 / MLHE-1), this protein is Acetylglutamate kinase.